Here is a 415-residue protein sequence, read N- to C-terminus: Tyrosine--tRNA ligase (415 aa).

Residues 54–63 (PTGSNIHLGH) carry the 'HIGH' region motif. The 'KMSKS' region signature appears at 248–252 (KMSKS). Lys-251 provides a ligand contact to ATP. Positions 351–415 (AKAFYLLSAV…GKKTFRRLTA (65 aa)) constitute an S4 RNA-binding domain.

Belongs to the class-I aminoacyl-tRNA synthetase family. TyrS type 2 subfamily. As to quaternary structure, homodimer.

Its subcellular location is the cytoplasm. The catalysed reaction is tRNA(Tyr) + L-tyrosine + ATP = L-tyrosyl-tRNA(Tyr) + AMP + diphosphate + H(+). Catalyzes the attachment of tyrosine to tRNA(Tyr) in a two-step reaction: tyrosine is first activated by ATP to form Tyr-AMP and then transferred to the acceptor end of tRNA(Tyr). This chain is Tyrosine--tRNA ligase, found in Parasynechococcus marenigrum (strain WH8102).